We begin with the raw amino-acid sequence, 319 residues long: Acetyl-coenzyme A carboxylase carboxyl transferase subunit alpha (319 aa).

Residues 35–296 (NIDEEVHRLR…KAQLLTDLAD (262 aa)) enclose the CoA carboxyltransferase C-terminal domain.

It belongs to the AccA family. As to quaternary structure, acetyl-CoA carboxylase is a heterohexamer composed of biotin carboxyl carrier protein (AccB), biotin carboxylase (AccC) and two subunits each of ACCase subunit alpha (AccA) and ACCase subunit beta (AccD).

Its subcellular location is the cytoplasm. The enzyme catalyses N(6)-carboxybiotinyl-L-lysyl-[protein] + acetyl-CoA = N(6)-biotinyl-L-lysyl-[protein] + malonyl-CoA. Its pathway is lipid metabolism; malonyl-CoA biosynthesis; malonyl-CoA from acetyl-CoA: step 1/1. Its function is as follows. Component of the acetyl coenzyme A carboxylase (ACC) complex. First, biotin carboxylase catalyzes the carboxylation of biotin on its carrier protein (BCCP) and then the CO(2) group is transferred by the carboxyltransferase to acetyl-CoA to form malonyl-CoA. The polypeptide is Acetyl-coenzyme A carboxylase carboxyl transferase subunit alpha (Escherichia coli O45:K1 (strain S88 / ExPEC)).